A 209-amino-acid chain; its full sequence is Small ribosomal subunit protein uS4 (209 aa).

Residues 99-179 (GRLDSVAYRM…FPEWIEVDAK (81 aa)) enclose the S4 RNA-binding domain.

This sequence belongs to the universal ribosomal protein uS4 family. As to quaternary structure, part of the 30S ribosomal subunit. Contacts protein S5. The interaction surface between S4 and S5 is involved in control of translational fidelity.

One of the primary rRNA binding proteins, it binds directly to 16S rRNA where it nucleates assembly of the body of the 30S subunit. In terms of biological role, with S5 and S12 plays an important role in translational accuracy. This Azoarcus sp. (strain BH72) protein is Small ribosomal subunit protein uS4.